The chain runs to 333 residues: Fibronectin type III domain-containing protein 11 (333 aa).

Positions proline 212–glycine 310 constitute a Fibronectin type-III domain. A disordered region spans residues threonine 307–arginine 333.

The polypeptide is Fibronectin type III domain-containing protein 11 (Bos taurus (Bovine)).